We begin with the raw amino-acid sequence, 313 residues long: 2-dehydro-3-deoxygluconokinase/2-dehydro-3-deoxygalactonokinase (313 aa).

Residues 34-38 (GSELN), tyrosine 90, 106-108 (YYR), and arginine 166 each bind substrate. Residues 164 to 166 (NIR), 226 to 231 (KLGSKG), and 255 to 258 (GAGD) each bind ATP. Substrate contacts are provided by aspartate 258 and aspartate 294. Aspartate 258 serves as the catalytic Proton acceptor.

In terms of assembly, homohexamer; trimer of dimers.

It carries out the reaction 2-dehydro-3-deoxy-D-gluconate + ATP = 2-dehydro-3-deoxy-6-phospho-D-gluconate + ADP + H(+). The catalysed reaction is 2-dehydro-3-deoxy-D-galactonate + ATP = 2-dehydro-3-deoxy-6-phospho-D-galactonate + ADP + H(+). It participates in carbohydrate acid metabolism; 2-dehydro-3-deoxy-D-gluconate degradation; D-glyceraldehyde 3-phosphate and pyruvate from 2-dehydro-3-deoxy-D-gluconate: step 1/2. Involved in the degradation of glucose and galactose via the semi-phosphorylative Entner-Doudoroff pathway. Catalyzes the phosphorylation of 2-keto-3-deoxygluconate (KDG) and 2-keto-3-deoxygalactonate (KDGal) to produce 2-keto-3-deoxy-6-phosphogluconate (KDPG) and 2-keto-3-deoxy-6-phosphogalactonate (KDPGal), respectively. This chain is 2-dehydro-3-deoxygluconokinase/2-dehydro-3-deoxygalactonokinase (kdgK), found in Saccharolobus solfataricus (strain ATCC 35092 / DSM 1617 / JCM 11322 / P2) (Sulfolobus solfataricus).